Consider the following 176-residue polypeptide: MATKRICVARIGAPHGVRGALKLWPFTEDPLAVLDYGPLTTQDGSRRFEVETAREAKDHLVATLKGVASRDDAVRLNGIELYIDRDQLPETDEGEYYHADLIGLAAVTAAGEPLGKVAAIHNFGAGDIIEIAPPSGPTLLLPFTNAVVPTVDLEGGRVVIEMPGEIEGDTPNHPEA.

The PRC barrel domain maps to 93 to 166; it reads EGEYYHADLI…RVVIEMPGEI (74 aa).

Belongs to the RimM family. Binds ribosomal protein uS19.

It localises to the cytoplasm. In terms of biological role, an accessory protein needed during the final step in the assembly of 30S ribosomal subunit, possibly for assembly of the head region. Essential for efficient processing of 16S rRNA. May be needed both before and after RbfA during the maturation of 16S rRNA. It has affinity for free ribosomal 30S subunits but not for 70S ribosomes. The polypeptide is Ribosome maturation factor RimM (Rhodopseudomonas palustris (strain BisA53)).